Consider the following 185-residue polypeptide: uncharacterized protein (185 aa).

To M.thermoautotrophicum MTH236.

This is an uncharacterized protein from Methanocaldococcus jannaschii (strain ATCC 43067 / DSM 2661 / JAL-1 / JCM 10045 / NBRC 100440) (Methanococcus jannaschii).